We begin with the raw amino-acid sequence, 221 residues long: Riboflavin kinase (221 aa).

Positions 1-89 are H-T-H motif-like; that stretch reads MENIYIALKT…ISSILRFSQE (89 aa). Residues 90 to 221 form a riboflavin kinase region; the sequence is LKLVGAVQDG…EVLASIDGKL (132 aa). 99 to 104 provides a ligand contact to CDP; it reads GLGEGK. Positions 128 and 130 each coordinate Mg(2+). FMN contacts are provided by Ser185 and Glu192. 197–200 lines the CDP pocket; the sequence is KYLR.

It belongs to the archaeal riboflavin kinase family. Requires Mg(2+) as cofactor.

It catalyses the reaction riboflavin + CTP = CDP + FMN + H(+). Its pathway is cofactor biosynthesis; FMN biosynthesis; FMN from riboflavin (CTP route): step 1/1. Functionally, catalyzes the CTP-dependent phosphorylation of riboflavin (vitamin B2) to form flavin mononucleotide (FMN). The polypeptide is Riboflavin kinase (ribK) (Picrophilus torridus (strain ATCC 700027 / DSM 9790 / JCM 10055 / NBRC 100828 / KAW 2/3)).